Here is a 149-residue protein sequence, read N- to C-terminus: 3-dehydroquinate dehydratase (149 aa).

Residue Tyr-26 is the Proton acceptor of the active site. Residues Asn-78, His-84, and Asp-91 each contribute to the substrate site. Catalysis depends on His-104, which acts as the Proton donor. Substrate is bound by residues 105–106 (LS) and Arg-115.

Belongs to the type-II 3-dehydroquinase family. Homododecamer.

It carries out the reaction 3-dehydroquinate = 3-dehydroshikimate + H2O. Its pathway is metabolic intermediate biosynthesis; chorismate biosynthesis; chorismate from D-erythrose 4-phosphate and phosphoenolpyruvate: step 3/7. In terms of biological role, catalyzes a trans-dehydration via an enolate intermediate. This Polynucleobacter necessarius subsp. necessarius (strain STIR1) protein is 3-dehydroquinate dehydratase.